The primary structure comprises 93 residues: DNA-directed RNA polymerase subunit omega (93 aa).

It belongs to the RNA polymerase subunit omega family. In terms of assembly, the RNAP catalytic core consists of 2 alpha, 1 beta, 1 beta' and 1 omega subunit. When a sigma factor is associated with the core the holoenzyme is formed, which can initiate transcription.

It catalyses the reaction RNA(n) + a ribonucleoside 5'-triphosphate = RNA(n+1) + diphosphate. Functionally, promotes RNA polymerase assembly. Latches the N- and C-terminal regions of the beta' subunit thereby facilitating its interaction with the beta and alpha subunits. This is DNA-directed RNA polymerase subunit omega from Shewanella piezotolerans (strain WP3 / JCM 13877).